Here is a 433-residue protein sequence, read N- to C-terminus: Glutamate-1-semialdehyde 2,1-aminomutase (433 aa).

K271 is modified (N6-(pyridoxal phosphate)lysine).

It belongs to the class-III pyridoxal-phosphate-dependent aminotransferase family. HemL subfamily. In terms of assembly, homodimer. Requires pyridoxal 5'-phosphate as cofactor.

Its subcellular location is the cytoplasm. It carries out the reaction (S)-4-amino-5-oxopentanoate = 5-aminolevulinate. It functions in the pathway porphyrin-containing compound metabolism; protoporphyrin-IX biosynthesis; 5-aminolevulinate from L-glutamyl-tRNA(Glu): step 2/2. Its pathway is porphyrin-containing compound metabolism; chlorophyll biosynthesis. The sequence is that of Glutamate-1-semialdehyde 2,1-aminomutase from Prochlorococcus marinus (strain MIT 9515).